Reading from the N-terminus, the 91-residue chain is Small ribosomal subunit protein bS18 (91 aa).

It belongs to the bacterial ribosomal protein bS18 family. As to quaternary structure, part of the 30S ribosomal subunit. Forms a tight heterodimer with protein bS6.

Its function is as follows. Binds as a heterodimer with protein bS6 to the central domain of the 16S rRNA, where it helps stabilize the platform of the 30S subunit. The sequence is that of Small ribosomal subunit protein bS18 from Burkholderia multivorans (strain ATCC 17616 / 249).